Consider the following 216-residue polypeptide: N-(5'-phosphoribosyl)anthranilate isomerase (216 aa).

The protein belongs to the TrpF family.

It carries out the reaction N-(5-phospho-beta-D-ribosyl)anthranilate = 1-(2-carboxyphenylamino)-1-deoxy-D-ribulose 5-phosphate. It functions in the pathway amino-acid biosynthesis; L-tryptophan biosynthesis; L-tryptophan from chorismate: step 3/5. This Leptospira borgpetersenii serovar Hardjo-bovis (strain JB197) protein is N-(5'-phosphoribosyl)anthranilate isomerase.